A 505-amino-acid polypeptide reads, in one-letter code: Flagellin (505 aa).

It belongs to the bacterial flagellin family.

It is found in the secreted. It localises to the bacterial flagellum. Its function is as follows. Flagellin is the subunit protein which polymerizes to form the filaments of bacterial flagella. The polypeptide is Flagellin (fliC) (Salmonella dublin).